The following is a 503-amino-acid chain: Cytochrome P450 3A12 (503 aa).

Cys442 is a heme binding site.

This sequence belongs to the cytochrome P450 family. It depends on heme as a cofactor.

The protein resides in the endoplasmic reticulum membrane. It is found in the microsome membrane. It catalyses the reaction an organic molecule + reduced [NADPH--hemoprotein reductase] + O2 = an alcohol + oxidized [NADPH--hemoprotein reductase] + H2O + H(+). Its function is as follows. Cytochromes P450 are a group of heme-thiolate monooxygenases. In liver microsomes, this enzyme is involved in an NADPH-dependent electron transport pathway. It oxidizes a variety of structurally unrelated compounds, including steroids, fatty acids, and xenobiotics. This is Cytochrome P450 3A12 (CYP3A12) from Canis lupus familiaris (Dog).